The following is a 531-amino-acid chain: T-complex protein 1 subunit zeta (531 aa).

Alanine 2 bears the N-acetylalanine mark. At lysine 5 the chain carries N6-acetyllysine. Position 39 (glycine 39) interacts with ADP. Residue glycine 39 participates in ATP binding. Aspartate 90 is a binding site for Mg(2+). Residues glycine 91, threonine 92, threonine 93, serine 94, threonine 158, and lysine 159 each contribute to the ADP site. Residues glycine 91, threonine 92, and threonine 93 each coordinate ATP. Lysine 199 carries the N6-acetyllysine modification. Serine 205 bears the Phosphoserine mark. Residue lysine 251 forms a Glycyl lysine isopeptide (Lys-Gly) (interchain with G-Cter in SUMO2) linkage. Residues lysine 287, lysine 365, lysine 377, and lysine 388 each carry the N6-acetyllysine modification. Position 411 (alanine 411) interacts with ADP. 4 residues coordinate ATP: alanine 411, glycine 412, aspartate 496, and lysine 501. Aspartate 496 contributes to the ADP binding site.

This sequence belongs to the TCP-1 chaperonin family. As to quaternary structure, component of the chaperonin-containing T-complex (TRiC), a hexadecamer composed of two identical back-to-back stacked rings enclosing a protein folding chamber. Each ring is made up of eight different subunits: TCP1/CCT1, CCT2, CCT3, CCT4, CCT5, CCT6A/CCT6, CCT7, CCT8. Interacts with PACRG.

Its subcellular location is the cytoplasm. It catalyses the reaction ATP + H2O = ADP + phosphate + H(+). Component of the chaperonin-containing T-complex (TRiC), a molecular chaperone complex that assists the folding of actin, tubulin and other proteins upon ATP hydrolysis. The TRiC complex mediates the folding of WRAP53/TCAB1, thereby regulating telomere maintenance. The sequence is that of T-complex protein 1 subunit zeta (CCT6A) from Homo sapiens (Human).